The chain runs to 30 residues: Propionyl-CoA carboxylase alpha chain (30 aa).

The 30-residue stretch at 1-30 (PKIRKVLVANRGEIAIRVMRTXKELGIATV) folds into the Biotin carboxylation domain.

As to quaternary structure, dodecamer composed of six biotin-containing alpha subunits and six beta subunits. Mg(2+) serves as cofactor. Mn(2+) is required as a cofactor. It depends on biotin as a cofactor.

It catalyses the reaction propanoyl-CoA + hydrogencarbonate + ATP = (S)-methylmalonyl-CoA + ADP + phosphate + H(+). Its pathway is metabolic intermediate metabolism; propanoyl-CoA degradation; succinyl-CoA from propanoyl-CoA: step 1/3. Its function is as follows. This is one of the 2 subunits of the biotin-dependent propionyl-CoA carboxylase (PCC), the enzyme catalyzing the carboxylation of propionyl-CoA/propanoyl-CoA to D-methylmalonyl-CoA/(S)-methylmalonyl-CoA. Within the holoenzyme, the alpha subunit catalyzes the ATP-dependent carboxylation of the biotin carried by the biotin carboxyl carrier (BCC) domain, while the beta subunit then transfers the carboxyl group from carboxylated biotin to propionyl-CoA. Propionyl-CoA carboxylase also carboxylates acetyl-CoA, butyryl-CoA and succinyl-CoA. This is Propionyl-CoA carboxylase alpha chain from Myxococcus xanthus.